A 482-amino-acid polypeptide reads, in one-letter code: Falcipain-2b (482 aa).

Over 1–35 (MDYHMDYIPNEVISHQGERFVDKYVDRKILKNKKS) the chain is Cytoplasmic. The propeptide at 1-241 (MDYHMDYIPN…PLKNSKYLLD (241 aa)) is activation peptide. The Bipartite vacuolar targeting signal 1 motif lies at 16–25 (QGERFVDKYV). A helical; Signal-anchor for type II membrane protein membrane pass occupies residues 36 to 56 (LLVIISLSVLSVVGFILFYFT). Residues 57 to 482 (PNFRKSDLFK…GTDAFIPLIE (426 aa)) are Lumenal-facing. Asn-67 is a glycosylation site (N-linked (GlcNAc...) asparagine). The Bipartite vacuolar targeting signal 2 motif lies at 84 to 105 (KSPNGKKFIVSKIDEALSFYDN). A glycan (N-linked (GlcNAc...) asparagine) is linked at Asn-117. Positions 242–258 (QINYDAVIKKYKGNENF) match the Nose motif; required for the correct folding of the mature form motif. 4 cysteine pairs are disulfide-bonded: Cys-280–Cys-321, Cys-314–Cys-355, Cys-340–Cys-360, and Cys-409–Cys-470. Residue Cys-283 is part of the active site. His-415 is an active-site residue. Positions 426 to 435 (EIVNPLTKKG) match the Arm motif; binds to host hemoglobin and required for the inhibitory interaction between the propeptide and the catalytic domain motif.

Belongs to the peptidase C1 family. As to quaternary structure, component of the hemozoin formation complex (HFC) composed of falcipains FP2A and/or FP2B, plasmepsins PMII, PMIII/HAP and PMIV, heme detoxifying protein HDP and falcilysin FLN. The HFC complex is involved in hemoglobin degradation and detoxification of heme in the food vacuole during the asexual blood stage.

The protein localises to the vacuole. The protein resides in the membrane. Functionally, cysteine protease which cleaves native host hemoglobin in the food vacuole during the asexual blood stage. Preferentially cleaves substrates which have a leucine at the P2 position. This Plasmodium falciparum (isolate 3D7) protein is Falcipain-2b.